The primary structure comprises 546 residues: Chaperonin GroEL (546 aa).

Residues 29–32, K50, 86–90, G414, and D492 contribute to the ATP site; these read TMGP and DGTTT.

It belongs to the chaperonin (HSP60) family. As to quaternary structure, forms a cylinder of 14 subunits composed of two heptameric rings stacked back-to-back. Interacts with the co-chaperonin GroES.

The protein resides in the cytoplasm. The enzyme catalyses ATP + H2O + a folded polypeptide = ADP + phosphate + an unfolded polypeptide.. Together with its co-chaperonin GroES, plays an essential role in assisting protein folding. The GroEL-GroES system forms a nano-cage that allows encapsulation of the non-native substrate proteins and provides a physical environment optimized to promote and accelerate protein folding. The polypeptide is Chaperonin GroEL (Helicobacter acinonychis (strain Sheeba)).